A 202-amino-acid chain; its full sequence is MTKPQTLIIATNNANKAREFSAMLAPYDITIKTLADFPNIPEIKENGITFEENATKKATVVVEATGLPAIADDSGLMVKALHGDPGVFSARYAGDHDDAANNAKLLANLGGVPEAERTATFHTTLVALKPSGEKLVVNGELAGRILIAPRGDNGFGYDPLFWSSKFQKSLAELTPAQKNQISHRGAALRQLMTKFDEWWAKA.

11-16 serves as a coordination point for substrate; that stretch reads TNNANK. The Proton acceptor role is filled by D73. D73 serves as a coordination point for Mg(2+). Substrate contacts are provided by residues S74, 155-158, K178, and 183-184; these read FGYD and HR.

This sequence belongs to the HAM1 NTPase family. In terms of assembly, homodimer. Requires Mg(2+) as cofactor.

It catalyses the reaction XTP + H2O = XMP + diphosphate + H(+). It carries out the reaction dITP + H2O = dIMP + diphosphate + H(+). The catalysed reaction is ITP + H2O = IMP + diphosphate + H(+). In terms of biological role, pyrophosphatase that catalyzes the hydrolysis of nucleoside triphosphates to their monophosphate derivatives, with a high preference for the non-canonical purine nucleotides XTP (xanthosine triphosphate), dITP (deoxyinosine triphosphate) and ITP. Seems to function as a house-cleaning enzyme that removes non-canonical purine nucleotides from the nucleotide pool, thus preventing their incorporation into DNA/RNA and avoiding chromosomal lesions. This chain is dITP/XTP pyrophosphatase, found in Lactiplantibacillus plantarum (strain ATCC BAA-793 / NCIMB 8826 / WCFS1) (Lactobacillus plantarum).